Reading from the N-terminus, the 271-residue chain is (21S)-21-acetoxyl-apo-melianone synthase SDR (271 aa).

The Proton donor role is filled by Ser150. The active-site Proton acceptor is Tyr163. Residue Lys167 is the Proton donor/acceptor of the active site.

It belongs to the short-chain dehydrogenases/reductases (SDR) family. Mainly expressed in petioles.

The catalysed reaction is 21-O-acetyl-isomeliandiol + A = (21S)-21-acetoxyl-apo-melianone + AH2. Its pathway is secondary metabolite biosynthesis; terpenoid biosynthesis. In terms of biological role, oxidoreductase involved in the biosynthesis of limonoids triterpene natural products such as azadirachtin, an antifeedant widely used as bioinsecticide, and possessing many medicinal applications including anti-tumoral, anti-malarial, anti-rheumatic, antibacterial, anti-inflammatory, anti-pyretic and diuretic effects. Catalyzes the oxidation of 21-O-acetyl-isomeliandiol to (21S)-21-acetoxyl-apo-melianone. In Melia azedarach (Chinaberry tree), this protein is (21S)-21-acetoxyl-apo-melianone synthase SDR.